The sequence spans 220 residues: MTDKSTARKKITRIGIGGPVGSGKTAIIEVITPILIKRGIKPLIITNDIVTTEDAKQVKRTLKGILDEEKILGVETGACPHTAVREDPSMNIAAVEEMEERFPESDLIMIESGGDNLTLTFSPALADFYIYVIDVAEGEKIPRKNGPGLVQADILVINKIDLAPYVGASLDVMESDTKVVRGNRPYILTNCKTGQGIEELVDMIMRDFLFTHVQPEGEQA.

18–25 (GPVGSGKT) is a GTP binding site.

The protein belongs to the SIMIBI class G3E GTPase family. UreG subfamily. In terms of assembly, homodimer. UreD, UreF and UreG form a complex that acts as a GTP-hydrolysis-dependent molecular chaperone, activating the urease apoprotein by helping to assemble the nickel containing metallocenter of UreC. The UreE protein probably delivers the nickel.

It is found in the cytoplasm. Facilitates the functional incorporation of the urease nickel metallocenter. This process requires GTP hydrolysis, probably effectuated by UreG. The polypeptide is Urease accessory protein UreG (Yersinia pestis).